The following is a 212-amino-acid chain: Redox-sensing transcriptional repressor Rex (212 aa).

Positions 16–55 (IYYRYLNILLDADKTRVSSTELSEAVKVDSATIRRDFSYF) form a DNA-binding region, H-T-H motif. 90 to 95 (GVGNLG) is an NAD(+) binding site.

Belongs to the transcriptional regulatory Rex family. As to quaternary structure, homodimer.

It localises to the cytoplasm. Functionally, modulates transcription in response to changes in cellular NADH/NAD(+) redox state. This Levilactobacillus brevis (strain ATCC 367 / BCRC 12310 / CIP 105137 / JCM 1170 / LMG 11437 / NCIMB 947 / NCTC 947) (Lactobacillus brevis) protein is Redox-sensing transcriptional repressor Rex.